Reading from the N-terminus, the 156-residue chain is Phosphopantetheine adenylyltransferase (156 aa).

Position 10 (T10) interacts with substrate. Residues 10–11 and H18 each bind ATP; that span reads TF. Residues K42, L74, and R88 each coordinate substrate. Residues 89-91, E99, and 124-130 each bind ATP; these read GLR and NAFISSS.

Belongs to the bacterial CoaD family. As to quaternary structure, homohexamer. Requires Mg(2+) as cofactor.

The protein localises to the cytoplasm. It carries out the reaction (R)-4'-phosphopantetheine + ATP + H(+) = 3'-dephospho-CoA + diphosphate. It participates in cofactor biosynthesis; coenzyme A biosynthesis; CoA from (R)-pantothenate: step 4/5. Functionally, reversibly transfers an adenylyl group from ATP to 4'-phosphopantetheine, yielding dephospho-CoA (dPCoA) and pyrophosphate. This chain is Phosphopantetheine adenylyltransferase, found in Campylobacter concisus (strain 13826).